A 2176-amino-acid polypeptide reads, in one-letter code: Nipped-B-like protein scc-2 (2176 aa).

Residues 1-25 (MDPNNLQNSLNGTGNPNFQPVQTNA) show a composition bias toward polar residues. Disordered stretches follow at residues 1 to 27 (MDPN…NAGG), 150 to 170 (PIPQ…QIQS), 464 to 483 (SEAT…DEEG), 495 to 514 (MMSV…NQRK), 523 to 551 (YDSL…DDED), 585 to 615 (QHFF…IESR), and 669 to 708 (DSLD…EMDE). Positions 464 to 473 (SEATQSSSVT) are enriched in low complexity. 2 stretches are compositionally biased toward basic and acidic residues: residues 597-615 (EDRI…IESR) and 685-695 (SGGDHHHKGDE). Residues 696 to 708 (NSDESDEEEEMDE) are compositionally biased toward acidic residues. HEAT repeat units lie at residues 1280–1312 (DTYL…IIEA), 1320–1351 (EDVQ…FVLY), 1353–1388 (EEYV…ICEK), 1393–1426 (EMIP…LWFQ), 1692–1723 (EKVF…FCAQ), 1803–1834 (QKYW…TLNQ), and 1840–1871 (GASI…IDSK). The segment at 2149 to 2176 (ITAANDDYDEEEDGGEDSRGPIMEQMEH) is disordered. Residues 2154–2163 (DDYDEEEDGG) show a composition bias toward acidic residues.

This sequence belongs to the SCC2/Nipped-B family. In terms of assembly, may heterodimerize with mau-2/SCC4 to form the cohesin loading complex.

The protein resides in the nucleus. It localises to the chromosome. Its function is as follows. Plays an important role in the loading of the cohesin complex on to meiotic chromosomes. Forms a heterodimeric complex (also known as cohesin loading complex) with mau-2/SCC4 which mediates the loading of the cohesin complex onto chromatin. Plays an essential role in cell division during embryonic development. Promotes normal chromosome organization during meiosis. Required for the assembly of the synaptonemal complex between homologous chromosomes to promote sister chromatid cohesion during meiosis. Required for chromosome segregation during mitosis and meiosis. Plays a role in DNA double-strand break (DSB) repair during meiotic recombination and promotes the assembly of the 9-1-1 cell-cycle checkpoint response complex which is required for inducing apoptosis in response to DNA damage, at DNA damage sites. The polypeptide is Nipped-B-like protein scc-2 (Caenorhabditis elegans).